The following is a 594-amino-acid chain: Actin-histidine N-methyltransferase (594 aa).

The disordered stretch occupies residues 1–22; it reads MGKKSRVKTQKSGTGATATVSP. A compositionally biased stretch (polar residues) spans 10–20; the sequence is QKSGTGATATV. Residues Arg-75, 104–106, Arg-254, 275–279, and 325–327 contribute to the S-adenosyl-L-methionine site; these read EGF, DMCNH, and SGF. The SET domain maps to 94–314; sequence EGFEMVNFKE…AGEQIYIFYG (221 aa). Position 513 is a phosphoserine (Ser-513). The interval 549–594 is disordered; sequence ENGLVNGENSIPNGTRSENESLNQESKRAVEDAKGSSSDSTAGVKE. Residues 555–572 are compositionally biased toward polar residues; it reads GENSIPNGTRSENESLNQ. Residues 573–582 are compositionally biased toward basic and acidic residues; sequence ESKRAVEDAK. A compositionally biased stretch (polar residues) spans 583 to 594; it reads GSSSDSTAGVKE.

Belongs to the class V-like SAM-binding methyltransferase superfamily. SETD3 actin-histidine methyltransferase family. Interacts with MYOD1. Phosphorylated by GSK3B, which is required for recognition by the SCF(FBXW7) complex and subsequent degradation. Post-translationally, ubiquitinated by the SCF(FBXW7) complex following phosphorylation by GSK3B, leading to its degradation by the proteasome.

Its subcellular location is the cytoplasm. The protein resides in the nucleus. It catalyses the reaction L-histidyl-[protein] + S-adenosyl-L-methionine = N(tele)-methyl-L-histidyl-[protein] + S-adenosyl-L-homocysteine + H(+). Its function is as follows. Protein-histidine N-methyltransferase that specifically mediates 3-methylhistidine (tele-methylhistidine) methylation of actin at 'His-73'. Histidine methylation of actin is required for smooth muscle contraction of the laboring uterus during delivery. Does not have protein-lysine N-methyltransferase activity and probably only catalyzes histidine methylation of actin. The sequence is that of Actin-histidine N-methyltransferase from Homo sapiens (Human).